A 355-amino-acid chain; its full sequence is NADH-quinone oxidoreductase subunit H (355 aa).

Transmembrane regions (helical) follow at residues 17–37, 86–106, 119–139, 165–185, 204–224, 262–282, 291–311, and 332–352; these read IIMV…IAYI, GVFL…WAVI, VGIL…IMAG, IGFV…SAVV, ILNW…VSAL, YVAI…GWLP, WVPG…LFAM, and FLPL…FAGI.

This sequence belongs to the complex I subunit 1 family. As to quaternary structure, NDH-1 is composed of 14 different subunits. Subunits NuoA, H, J, K, L, M, N constitute the membrane sector of the complex.

It is found in the cell inner membrane. The catalysed reaction is a quinone + NADH + 5 H(+)(in) = a quinol + NAD(+) + 4 H(+)(out). Its function is as follows. NDH-1 shuttles electrons from NADH, via FMN and iron-sulfur (Fe-S) centers, to quinones in the respiratory chain. The immediate electron acceptor for the enzyme in this species is believed to be ubiquinone. Couples the redox reaction to proton translocation (for every two electrons transferred, four hydrogen ions are translocated across the cytoplasmic membrane), and thus conserves the redox energy in a proton gradient. This subunit may bind ubiquinone. This is NADH-quinone oxidoreductase subunit H from Bradyrhizobium diazoefficiens (strain JCM 10833 / BCRC 13528 / IAM 13628 / NBRC 14792 / USDA 110).